The following is a 248-amino-acid chain: UDP-2,3-diacylglucosamine hydrolase (248 aa).

Mn(2+)-binding residues include D7, H9, D40, N78, and H113. 78–79 contacts substrate; sequence NR. 5 residues coordinate substrate: D121, S159, T163, K166, and H194. Mn(2+)-binding residues include H194 and H196.

This sequence belongs to the LpxH family. The cofactor is Mn(2+).

The protein localises to the cell inner membrane. The enzyme catalyses UDP-2-N,3-O-bis[(3R)-3-hydroxytetradecanoyl]-alpha-D-glucosamine + H2O = 2-N,3-O-bis[(3R)-3-hydroxytetradecanoyl]-alpha-D-glucosaminyl 1-phosphate + UMP + 2 H(+). The protein operates within glycolipid biosynthesis; lipid IV(A) biosynthesis; lipid IV(A) from (3R)-3-hydroxytetradecanoyl-[acyl-carrier-protein] and UDP-N-acetyl-alpha-D-glucosamine: step 4/6. In terms of biological role, hydrolyzes the pyrophosphate bond of UDP-2,3-diacylglucosamine to yield 2,3-diacylglucosamine 1-phosphate (lipid X) and UMP by catalyzing the attack of water at the alpha-P atom. Involved in the biosynthesis of lipid A, a phosphorylated glycolipid that anchors the lipopolysaccharide to the outer membrane of the cell. The polypeptide is UDP-2,3-diacylglucosamine hydrolase (Pseudomonas fluorescens (strain Pf0-1)).